Here is a 215-residue protein sequence, read N- to C-terminus: Deoxyribose-phosphate aldolase (215 aa).

Residue Asp89 is the Proton donor/acceptor of the active site. The active-site Schiff-base intermediate with acetaldehyde is Lys150. The active-site Proton donor/acceptor is the Lys174.

The protein belongs to the DeoC/FbaB aldolase family. DeoC type 1 subfamily.

It is found in the cytoplasm. The catalysed reaction is 2-deoxy-D-ribose 5-phosphate = D-glyceraldehyde 3-phosphate + acetaldehyde. It participates in carbohydrate degradation; 2-deoxy-D-ribose 1-phosphate degradation; D-glyceraldehyde 3-phosphate and acetaldehyde from 2-deoxy-alpha-D-ribose 1-phosphate: step 2/2. Functionally, catalyzes a reversible aldol reaction between acetaldehyde and D-glyceraldehyde 3-phosphate to generate 2-deoxy-D-ribose 5-phosphate. The chain is Deoxyribose-phosphate aldolase from Natronomonas pharaonis (strain ATCC 35678 / DSM 2160 / CIP 103997 / JCM 8858 / NBRC 14720 / NCIMB 2260 / Gabara) (Halobacterium pharaonis).